We begin with the raw amino-acid sequence, 132 residues long: Ribosome-binding factor A (132 aa).

Belongs to the RbfA family. In terms of assembly, monomer. Binds 30S ribosomal subunits, but not 50S ribosomal subunits or 70S ribosomes.

Its subcellular location is the cytoplasm. Functionally, one of several proteins that assist in the late maturation steps of the functional core of the 30S ribosomal subunit. Associates with free 30S ribosomal subunits (but not with 30S subunits that are part of 70S ribosomes or polysomes). Required for efficient processing of 16S rRNA. May interact with the 5'-terminal helix region of 16S rRNA. This chain is Ribosome-binding factor A, found in Rhizorhabdus wittichii (strain DSM 6014 / CCUG 31198 / JCM 15750 / NBRC 105917 / EY 4224 / RW1) (Sphingomonas wittichii).